The primary structure comprises 205 residues: MNQQYPSMLLEKAVGEFAKLPGVGRKTAMRLVLHLLRQDTAVVEAFGNAMITLKHEVKYCKVCHNISDTETCRICSNPARDASTICVVESIRDVMAVEATQQYRGLYHVLGGVISPMDGIGPSDLQIESLVERVKGGEVKEVILALSSTMEGDTTNFYISRKLDGMDVKLSVIARGISIGDELEYTDEVTLGRSIINRTLFTGTA.

A C4-type zinc finger spans residues 60–75 (CKVCHNISDTETCRIC). Residues 83-178 (STICVVESIR…KLSVIARGIS (96 aa)) enclose the Toprim domain.

Belongs to the RecR family.

Functionally, may play a role in DNA repair. It seems to be involved in an RecBC-independent recombinational process of DNA repair. It may act with RecF and RecO. The chain is Recombination protein RecR from Phocaeicola vulgatus (strain ATCC 8482 / DSM 1447 / JCM 5826 / CCUG 4940 / NBRC 14291 / NCTC 11154) (Bacteroides vulgatus).